Consider the following 339-residue polypeptide: Heat-inducible transcription repressor HrcA (339 aa).

The protein belongs to the HrcA family.

In terms of biological role, negative regulator of class I heat shock genes (grpE-dnaK-dnaJ and groELS operons). Prevents heat-shock induction of these operons. This Cutibacterium acnes (strain DSM 16379 / KPA171202) (Propionibacterium acnes) protein is Heat-inducible transcription repressor HrcA.